Consider the following 508-residue polypeptide: Histidine--tRNA ligase, cytoplasmic (508 aa).

One can recognise a WHEP-TRS domain in the interval 3-59 (SPALEELVLNSRHRLVRGLKQQKASADQIEEEVAKLLKLKAQLGHDESKQKFVLKTP). Phosphoserine is present on Ser66. Residues 130 to 132 (DLT), Arg157, Asp177, Arg326, and 330 to 331 (YY) contribute to the L-histidine site.

Belongs to the class-II aminoacyl-tRNA synthetase family. In terms of assembly, homodimer.

It localises to the cytoplasm. The catalysed reaction is tRNA(His) + L-histidine + ATP = L-histidyl-tRNA(His) + AMP + diphosphate + H(+). Functionally, catalyzes the ATP-dependent ligation of histidine to the 3'-end of its cognate tRNA, via the formation of an aminoacyl-adenylate intermediate (His-AMP). Plays a role in axon guidance. In Mesocricetus auratus (Golden hamster), this protein is Histidine--tRNA ligase, cytoplasmic (HARS1).